The sequence spans 642 residues: Transmembrane 9 superfamily member 4 (642 aa).

Positions 1 to 23 (MATAMDWLPWSLLLFSLMCETSA) are cleaved as a signal peptide. At 24–281 (FYVPGVAPIN…TMSDVQIHWF (258 aa)) the chain is on the extracellular side. A helical transmembrane segment spans residues 282–302 (SIINSVVVVFFLSGILSMIII). Over 303–346 (RTLRKDIANYNKEDDIEDTMEESGWKLVHGDVFRPPQYPMILSS) the chain is Cytoplasmic. The residue at position 312 (tyrosine 312) is a Phosphotyrosine. The chain crosses the membrane as a helical span at residues 347-367 (LLGSGIQLFCMILIVIFVAML). Over 368–376 (GMLSPSSRG) the chain is Extracellular. The chain crosses the membrane as a helical span at residues 377-397 (ALMTTACFLFMFMGVFGGFSA). Over 398-416 (GRLYRTLKGHRWKKGAFCT) the chain is Cytoplasmic. A helical membrane pass occupies residues 417 to 437 (ATLYPGVVFGICFVLNCFIWG). Residues 438 to 449 (KHSSGAVPFPTM) lie on the Extracellular side of the membrane. The chain crosses the membrane as a helical span at residues 450–470 (VALLCMWFGISLPLVYLGYYF). Topologically, residues 471-501 (GFRKQPYDNPVRTNQIPRQIPEQRWYMNRFV) are cytoplasmic. The chain crosses the membrane as a helical span at residues 502–522 (GILMAGILPFGAMFIELFFIF). At 523–535 (SAIWENQFYYLFG) the chain is on the extracellular side. A helical membrane pass occupies residues 536–556 (FLFLVFIILVVSCSQISIVMV). The Cytoplasmic portion of the chain corresponds to 557-570 (YFQLCAEDYRWWWR). A helical transmembrane segment spans residues 571–591 (NFLVSGGSAFYVLVYAIFYFV). Residues 592-598 (NKLDIVE) lie on the Extracellular side of the membrane. A helical membrane pass occupies residues 599-619 (FIPSLLYFGYTALMVLSFWLL). Residues 620 to 642 (TGTIGFYAAYMFVRKIYAAVKID) are Cytoplasmic-facing.

Belongs to the nonaspanin (TM9SF) (TC 9.A.2) family. In terms of assembly, interacts with ATP6V1H in colon cancer cells. In terms of tissue distribution, highly expressed in metastatic melanoma cells whereas it is undetectable in primary melanoma cells, healthy skin tissues and peripheral blood lymphocytes. Expressed in CD34(+) hematopoietic progenitor cells and during monocyte and granulocyte differentiation. Overexpressed in acute myeloid leukemia, in particular in those displaying granulocytic differentiation (at protein level).

The protein localises to the membrane. It localises to the golgi apparatus. The protein resides in the early endosome. Functionally, associates with proteins harboring glycine-rich transmembrane domains and ensures their efficient localization to the cell surface. Regulates the assembly and activity of V-ATPase in colon cancer cells via its interaction with V-type proton ATPase subunit H (ATP6V1H) and contributes to V-ATPase-mediated pH alterations in cancer cells which play an important role in drug resistance and invasiveness of colon cancer cells. Plays an important role in an atypical phagocytic activity of metastatic melanoma cells called cannibalism and is involved in the pH regulation of the intracellular vesicles in tumor cells. The protein is Transmembrane 9 superfamily member 4 (TM9SF4) of Homo sapiens (Human).